Here is an 803-residue protein sequence, read N- to C-terminus: Spondin-1 (803 aa).

The N-terminal stretch at 1 to 23 (MGLIFQPLFWQYVATSYALMVLG) is a signal peptide. Residues 24 to 190 (FLDETVEKAI…DLTLEGGNEK (167 aa)) enclose the Reelin domain. 14 disulfides stabilise this stretch: C39/C124, C152/C178, C195/C331, C196/C335, C198/C409, C437/C474, C448/C483, C453/C488, C496/C532, C507/C511, C542/C548, C553/C589, C564/C568, and C599/C604. The Spondin domain maps to 191–383 (TIPDCCACGT…LTSLDHPQSP (193 aa)). Residue N210 is glycosylated (N-linked (GlcNAc...) asparagine). The Ca(2+) site is built by D320, D349, and D353. The interval 353–389 (DSGVTYESPNKPTIPQDKIRPLTSLDHPQSPSMTRGG) is disordered. Residues 354–365 (SGVTYESPNKPT) are compositionally biased toward polar residues. 5 consecutive TSP type-1 domains span residues 436–489 (TCIY…PGCS), 495–549 (TCMM…EECE), 552–605 (SCIV…PECH), 608–662 (PCVL…PECP), and 664–717 (SCEL…RKCQ). Residue N677 is glycosylated (N-linked (GlcNAc...) asparagine). A disordered region spans residues 722-741 (NERRHLKDAREKRRSEKIKE). The TSP type-1 6 domain occupies 750–802 (VCKMKPWTAWTECTKFCGGGIQERFMTVKKRFKSSQFTSCKDKKEIRACNVHP).

As to expression, expressed at high levels in the floor plate.

It localises to the secreted. It is found in the extracellular space. The protein localises to the extracellular matrix. In terms of biological role, promotes the attachment of spinal cord and sensory neuron cells and the outgrowth of neurites in vitro. May contribute to the growth and guidance of axons in both the spinal cord and the PNS. This Xenopus laevis (African clawed frog) protein is Spondin-1 (spon1).